The chain runs to 70 residues: MQELQQKIEDLETKLAFQELSVEELNQEVIKLNQLVAKQQQQISLMVNKLMDIEPSNMASESEETPPPHY.

Belongs to the SlyX family.

The chain is Protein SlyX homolog from Shewanella denitrificans (strain OS217 / ATCC BAA-1090 / DSM 15013).